The following is a 334-amino-acid chain: S-adenosylmethionine:tRNA ribosyltransferase-isomerase (334 aa).

It belongs to the QueA family. As to quaternary structure, monomer.

The protein resides in the cytoplasm. The enzyme catalyses 7-aminomethyl-7-carbaguanosine(34) in tRNA + S-adenosyl-L-methionine = epoxyqueuosine(34) in tRNA + adenine + L-methionine + 2 H(+). It functions in the pathway tRNA modification; tRNA-queuosine biosynthesis. In terms of biological role, transfers and isomerizes the ribose moiety from AdoMet to the 7-aminomethyl group of 7-deazaguanine (preQ1-tRNA) to give epoxyqueuosine (oQ-tRNA). This chain is S-adenosylmethionine:tRNA ribosyltransferase-isomerase, found in Aquifex aeolicus (strain VF5).